Reading from the N-terminus, the 161-residue chain is Ribosome maturation factor RimP (161 aa).

It belongs to the RimP family.

It is found in the cytoplasm. Its function is as follows. Required for maturation of 30S ribosomal subunits. This is Ribosome maturation factor RimP from Janthinobacterium sp. (strain Marseille) (Minibacterium massiliensis).